The primary structure comprises 456 residues: Cysteine--tRNA ligase (456 aa).

Cysteine 29 is a binding site for Zn(2+). The 'HIGH' region signature appears at 31-41 (PTVYDYAHVGN). 3 residues coordinate Zn(2+): cysteine 209, histidine 234, and glutamate 238. Positions 267-271 (KMSKS) match the 'KMSKS' region motif. Lysine 270 serves as a coordination point for ATP.

Belongs to the class-I aminoacyl-tRNA synthetase family. As to quaternary structure, monomer. Zn(2+) is required as a cofactor.

It is found in the cytoplasm. It catalyses the reaction tRNA(Cys) + L-cysteine + ATP = L-cysteinyl-tRNA(Cys) + AMP + diphosphate. The chain is Cysteine--tRNA ligase from Rhodospirillum centenum (strain ATCC 51521 / SW).